A 209-amino-acid chain; its full sequence is Aspartate kinase-like protein lolA1 (209 aa).

Residues 1 to 11 (MLDESPMRKGD) show a composition bias toward basic and acidic residues. The disordered stretch occupies residues 1 to 27 (MLDESPMRKGDSVSNDQSNPESNASVS). Polar residues predominate over residues 12–27 (SVSNDQSNPESNASVS).

Belongs to the aspartokinase family.

Its pathway is alkaloid biosynthesis. Aspartokinase-like protein; part of the gene cluster that mediates the biosynthesis of loline alkaloids, potent insecticidal agents composed of a pyrrolizidine ring system and an uncommon ether bridge linking carbons 2 and 7. Lolines are structurally differentiated by the various modifications of the L-amino group and include norloline, loline, N-methylloline, N-acetylloline, N-acetylnorloline, and N-formylloline. The first committed step is the condensation of O-acetyl-L-homoserine (derived from L-aspartic acid) and L-proline, probably catalyzed by the gamma-type pyridoxal 5'-phosphate(PLP)-dependent enzyme lolC, to give the diamino diacid, NACPP. Ensuing cyclization, decarboxylation, and acetylation steps yield 1-exo-acetamidopyrrolizidine (AcAP). LolO is required for installation of the ether bridge upon the pathway intermediate, 1-exo-acetamidopyrrolizidine (AcAP). In sequential 2-oxoglutarate- and O(2)-consuming steps, lolO removes hydrogens from C2 and C7 of AcAP to form both carbon-oxygen bonds in N-acetylnorloline (NANL), the precursor to all other lolines. The enzymes lolD, lolE, lolF and lolT have also been proposed to be involved in the ether-bridge installation. Further processing of the exocyclic moiety of NANL by fungal N-acetamidase (LolN), methyltransferase (LolM), and cytochrome P450 (LolP) enzymes, with occasional involvement of a plant acetyltransferase, generates the other known lolines. LolN transforms NANL to norlonine which is monomethylated and dimethylated to respectively lonine and N-methyllonine (NML) by lolM. LolP catalyzes hydroxylation of the methyl group in N-methylloline (NML) and further oxygenation to N-formylloline (NFL). A plant acetyltransferase is responsible for the acetylation of loline to form N-acetylloline (NAL). LolA might interact with aspartate kinase to prevent feedback inhibition of its activity by these end products and thereby promote production of L-homoserine from L-aspartate. The protein is Aspartate kinase-like protein lolA1 of Epichloe uncinata (Endophyte fungus).